A 363-amino-acid polypeptide reads, in one-letter code: MPHWITHPSELTDRLQAARPARIGLDTEFIRERTYWPQLALVQMAIGEEILLIDPLIPGMNAALKEWLTATDIVKVMHSASEDLVTFKCACGVLPRPLFDTQIAAALAGVGGGMGYQKLVQEVTGTLLTKGETRSDWMRRPLSPSQLEYAADDVRYLFAIHDELTRRLTEQNRLGWLAEDAERLLATVEHDDGERWPHVSLRTAQFLEPAAQRRLLRLLRWRDLQARQSDRPRSWILDNEVASQLARFPPADLDALLQQFDKFPKAPRKLANAVWDALNTPLPDEEHAPLAQAATDGNKAVLKRLQDTVAQRSHELGLPDGLLASRRHLETLIEQRSWPAALGQWRRAVLEAQVMPLLEASEA.

Residues 5-168 form the 3'-5' exonuclease domain; the sequence is ITHPSELTDR…AIHDELTRRL (164 aa). The HRDC domain occupies 208 to 288; that stretch reads EPAAQRRLLR…NTPLPDEEHA (81 aa).

This sequence belongs to the RNase D family. The cofactor is a divalent metal cation.

The protein resides in the cytoplasm. The catalysed reaction is Exonucleolytic cleavage that removes extra residues from the 3'-terminus of tRNA to produce 5'-mononucleotides.. In terms of biological role, exonuclease involved in the 3' processing of various precursor tRNAs. Initiates hydrolysis at the 3'-terminus of an RNA molecule and releases 5'-mononucleotides. In Xanthomonas oryzae pv. oryzae (strain KACC10331 / KXO85), this protein is Ribonuclease D.